Consider the following 332-residue polypeptide: Aspartate carbamoyltransferase catalytic subunit (332 aa).

Residues 1–20 (MPNTHDTKNNVSPSEYAKFD) are disordered. R72 and T73 together coordinate carbamoyl phosphate. An L-aspartate-binding site is contributed by K100. Residues R122, H152, and Q155 each contribute to the carbamoyl phosphate site. L-aspartate is bound by residues R186 and R241. 2 residues coordinate carbamoyl phosphate: G282 and P283.

This sequence belongs to the aspartate/ornithine carbamoyltransferase superfamily. ATCase family. As to quaternary structure, heterododecamer (2C3:3R2) of six catalytic PyrB chains organized as two trimers (C3), and six regulatory PyrI chains organized as three dimers (R2).

It catalyses the reaction carbamoyl phosphate + L-aspartate = N-carbamoyl-L-aspartate + phosphate + H(+). The protein operates within pyrimidine metabolism; UMP biosynthesis via de novo pathway; (S)-dihydroorotate from bicarbonate: step 2/3. Functionally, catalyzes the condensation of carbamoyl phosphate and aspartate to form carbamoyl aspartate and inorganic phosphate, the committed step in the de novo pyrimidine nucleotide biosynthesis pathway. The polypeptide is Aspartate carbamoyltransferase catalytic subunit (Psychrobacter sp. (strain TAD1)).